The primary structure comprises 192 residues: Thymidylate kinase (192 aa).

7 to 14 (GIDCVGKS) contributes to the ATP binding site.

It belongs to the thymidylate kinase family.

It catalyses the reaction dTMP + ATP = dTDP + ADP. Functionally, phosphorylation of dTMP to form dTDP in both de novo and salvage pathways of dTTP synthesis. The sequence is that of Thymidylate kinase from Campylobacter jejuni subsp. jejuni serotype O:23/36 (strain 81-176).